A 197-amino-acid polypeptide reads, in one-letter code: Methylamine utilization protein MauD (197 aa).

Residues 3–23 (FLIASNILLWIAFLGVTVVML) form a helical membrane-spanning segment. The Thioredoxin domain maps to 48-180 (PDIGDMAPEF…LESLLEADKT (133 aa)).

Its subcellular location is the membrane. Its pathway is one-carbon metabolism; methylamine degradation. Functionally, may be specifically involved in the processing, transport, and/or maturation of the MADH beta-subunit. This chain is Methylamine utilization protein MauD (mauD), found in Paracoccus versutus (Thiobacillus versutus).